The chain runs to 115 residues: Nucleoid-associated protein LBL_0065 (115 aa).

It belongs to the YbaB/EbfC family. Homodimer.

It is found in the cytoplasm. Its subcellular location is the nucleoid. In terms of biological role, binds to DNA and alters its conformation. May be involved in regulation of gene expression, nucleoid organization and DNA protection. This is Nucleoid-associated protein LBL_0065 from Leptospira borgpetersenii serovar Hardjo-bovis (strain L550).